The sequence spans 243 residues: 1-(5-phosphoribosyl)-5-[(5-phosphoribosylamino)methylideneamino] imidazole-4-carboxamide isomerase (243 aa).

Residue Asp8 is the Proton acceptor of the active site. The Proton donor role is filled by Asp129.

Belongs to the HisA/HisF family.

It localises to the cytoplasm. The enzyme catalyses 1-(5-phospho-beta-D-ribosyl)-5-[(5-phospho-beta-D-ribosylamino)methylideneamino]imidazole-4-carboxamide = 5-[(5-phospho-1-deoxy-D-ribulos-1-ylimino)methylamino]-1-(5-phospho-beta-D-ribosyl)imidazole-4-carboxamide. It participates in amino-acid biosynthesis; L-histidine biosynthesis; L-histidine from 5-phospho-alpha-D-ribose 1-diphosphate: step 4/9. In Brucella abortus (strain 2308), this protein is 1-(5-phosphoribosyl)-5-[(5-phosphoribosylamino)methylideneamino] imidazole-4-carboxamide isomerase.